A 134-amino-acid polypeptide reads, in one-letter code: Parvalbumin-like EF-hand-containing protein (134 aa).

EF-hand domains follow at residues 55–90 (QLDD…IPSS) and 96–131 (LTDE…EKIP). Residues aspartate 68, aspartate 70, serine 72, phenylalanine 74, glutamate 76, glutamate 79, aspartate 109, aspartate 113, and glutamate 120 each contribute to the Ca(2+) site.

The protein belongs to the parvalbumin family.

The protein is Parvalbumin-like EF-hand-containing protein of Homo sapiens (Human).